A 535-amino-acid chain; its full sequence is Bifunctional purine biosynthesis protein PurH (535 aa).

Residues 1-148 (MNNARPIRRA…KNHKDTTIIV (148 aa)) enclose the MGS-like domain.

This sequence belongs to the PurH family.

It catalyses the reaction (6R)-10-formyltetrahydrofolate + 5-amino-1-(5-phospho-beta-D-ribosyl)imidazole-4-carboxamide = 5-formamido-1-(5-phospho-D-ribosyl)imidazole-4-carboxamide + (6S)-5,6,7,8-tetrahydrofolate. The enzyme catalyses IMP + H2O = 5-formamido-1-(5-phospho-D-ribosyl)imidazole-4-carboxamide. The protein operates within purine metabolism; IMP biosynthesis via de novo pathway; 5-formamido-1-(5-phospho-D-ribosyl)imidazole-4-carboxamide from 5-amino-1-(5-phospho-D-ribosyl)imidazole-4-carboxamide (10-formyl THF route): step 1/1. Its pathway is purine metabolism; IMP biosynthesis via de novo pathway; IMP from 5-formamido-1-(5-phospho-D-ribosyl)imidazole-4-carboxamide: step 1/1. The polypeptide is Bifunctional purine biosynthesis protein PurH (Shewanella woodyi (strain ATCC 51908 / MS32)).